Reading from the N-terminus, the 468-residue chain is Phenylalanine--tRNA ligase alpha subunit (468 aa).

Residues Thr311, 350–352 (QLD), and Phe390 each bind L-phenylalanine. Glu392 is a Mg(2+) binding site.

It belongs to the class-II aminoacyl-tRNA synthetase family. Phe-tRNA synthetase alpha subunit type 2 subfamily. As to quaternary structure, tetramer of two alpha and two beta subunits. Mg(2+) is required as a cofactor.

The protein localises to the cytoplasm. It carries out the reaction tRNA(Phe) + L-phenylalanine + ATP = L-phenylalanyl-tRNA(Phe) + AMP + diphosphate + H(+). The protein is Phenylalanine--tRNA ligase alpha subunit of Saccharolobus solfataricus (strain ATCC 35092 / DSM 1617 / JCM 11322 / P2) (Sulfolobus solfataricus).